Consider the following 234-residue polypeptide: Large ribosomal subunit protein uL1 (234 aa).

The protein belongs to the universal ribosomal protein uL1 family. As to quaternary structure, part of the 50S ribosomal subunit.

Its function is as follows. Binds directly to 23S rRNA. The L1 stalk is quite mobile in the ribosome, and is involved in E site tRNA release. In terms of biological role, protein L1 is also a translational repressor protein, it controls the translation of the L11 operon by binding to its mRNA. The chain is Large ribosomal subunit protein uL1 from Helicobacter hepaticus (strain ATCC 51449 / 3B1).